A 453-amino-acid chain; its full sequence is tRNA modification GTPase MnmE (453 aa).

Arg22, Glu79, and Lys119 together coordinate (6S)-5-formyl-5,6,7,8-tetrahydrofolate. The TrmE-type G domain maps to 215–376 (GMKVVIAGRP…LKQHLKSLMG (162 aa)). Position 225 (Asn225) interacts with K(+). Residues 225-230 (NAGKSS), 244-250 (TEIAGTT), 269-272 (DTAG), and 334-337 (NKAD) contribute to the GTP site. Position 229 (Ser229) interacts with Mg(2+). K(+)-binding residues include Thr244, Ile246, and Thr249. A Mg(2+)-binding site is contributed by Thr250. Lys453 contacts (6S)-5-formyl-5,6,7,8-tetrahydrofolate.

Belongs to the TRAFAC class TrmE-Era-EngA-EngB-Septin-like GTPase superfamily. TrmE GTPase family. Homodimer. Heterotetramer of two MnmE and two MnmG subunits. It depends on K(+) as a cofactor.

Its subcellular location is the cytoplasm. Exhibits a very high intrinsic GTPase hydrolysis rate. Involved in the addition of a carboxymethylaminomethyl (cmnm) group at the wobble position (U34) of certain tRNAs, forming tRNA-cmnm(5)s(2)U34. The chain is tRNA modification GTPase MnmE from Shewanella baltica (strain OS185).